A 440-amino-acid polypeptide reads, in one-letter code: Adenylosuccinate synthetase (440 aa).

GTP is bound by residues 14–20 and 42–44; these read GDEGKGK and GHT. Asp-15 (proton acceptor) is an active-site residue. Residues Asp-15 and Gly-42 each contribute to the Mg(2+) site. IMP-binding positions include 15-18, 40-43, Thr-131, Arg-145, Gln-226, Thr-241, and Arg-313; these read DEGK and NAGH. Catalysis depends on His-43, which acts as the Proton donor. 309–315 contacts substrate; that stretch reads ATTGRQR. GTP-binding positions include Arg-315, 341-343, and 423-425; these read KLD and STG.

It belongs to the adenylosuccinate synthetase family. In terms of assembly, homodimer. Mg(2+) serves as cofactor.

The protein resides in the cytoplasm. It carries out the reaction IMP + L-aspartate + GTP = N(6)-(1,2-dicarboxyethyl)-AMP + GDP + phosphate + 2 H(+). It participates in purine metabolism; AMP biosynthesis via de novo pathway; AMP from IMP: step 1/2. Functionally, plays an important role in the de novo pathway of purine nucleotide biosynthesis. Catalyzes the first committed step in the biosynthesis of AMP from IMP. The protein is Adenylosuccinate synthetase of Hydrogenovibrio crunogenus (strain DSM 25203 / XCL-2) (Thiomicrospira crunogena).